Reading from the N-terminus, the 174-residue chain is Shikimate kinase 2 (174 aa).

G12 to T17 contacts ATP. Mg(2+) contacts are provided by T16 and D32. 3 residues coordinate substrate: D34, R58, and G79. The LID domain stretch occupies residues Q112–K126. An ATP-binding site is contributed by R120. R139 contacts substrate.

This sequence belongs to the shikimate kinase family. AroL subfamily. Monomer. Requires Mg(2+) as cofactor.

The protein localises to the cytoplasm. The enzyme catalyses shikimate + ATP = 3-phosphoshikimate + ADP + H(+). It functions in the pathway metabolic intermediate biosynthesis; chorismate biosynthesis; chorismate from D-erythrose 4-phosphate and phosphoenolpyruvate: step 5/7. In terms of biological role, catalyzes the specific phosphorylation of the 3-hydroxyl group of shikimic acid using ATP as a cosubstrate. This is Shikimate kinase 2 from Shigella boydii serotype 18 (strain CDC 3083-94 / BS512).